The sequence spans 383 residues: Queuine tRNA-ribosyltransferase (383 aa).

The active-site Proton acceptor is Asp90. Residues 90–94, Asp144, Gln193, and Gly227 each bind substrate; that span reads DSGGF. Residues 258 to 264 are RNA binding; that stretch reads GVGTPED. Asp277 (nucleophile) is an active-site residue. Residues 282–286 are RNA binding; important for wobble base 34 recognition; sequence TRNAR. 4 residues coordinate Zn(2+): Cys315, Cys317, Cys320, and His346.

This sequence belongs to the queuine tRNA-ribosyltransferase family. As to quaternary structure, homodimer. Within each dimer, one monomer is responsible for RNA recognition and catalysis, while the other monomer binds to the replacement base PreQ1. Requires Zn(2+) as cofactor.

The catalysed reaction is 7-aminomethyl-7-carbaguanine + guanosine(34) in tRNA = 7-aminomethyl-7-carbaguanosine(34) in tRNA + guanine. Its pathway is tRNA modification; tRNA-queuosine biosynthesis. Its function is as follows. Catalyzes the base-exchange of a guanine (G) residue with the queuine precursor 7-aminomethyl-7-deazaguanine (PreQ1) at position 34 (anticodon wobble position) in tRNAs with GU(N) anticodons (tRNA-Asp, -Asn, -His and -Tyr). Catalysis occurs through a double-displacement mechanism. The nucleophile active site attacks the C1' of nucleotide 34 to detach the guanine base from the RNA, forming a covalent enzyme-RNA intermediate. The proton acceptor active site deprotonates the incoming PreQ1, allowing a nucleophilic attack on the C1' of the ribose to form the product. After dissociation, two additional enzymatic reactions on the tRNA convert PreQ1 to queuine (Q), resulting in the hypermodified nucleoside queuosine (7-(((4,5-cis-dihydroxy-2-cyclopenten-1-yl)amino)methyl)-7-deazaguanosine). In Ralstonia pickettii (strain 12J), this protein is Queuine tRNA-ribosyltransferase.